The sequence spans 155 residues: Protein-export protein SecB (155 aa).

Belongs to the SecB family. In terms of assembly, homotetramer, a dimer of dimers. One homotetramer interacts with 1 SecA dimer.

It is found in the cytoplasm. In terms of biological role, one of the proteins required for the normal export of preproteins out of the cell cytoplasm. It is a molecular chaperone that binds to a subset of precursor proteins, maintaining them in a translocation-competent state. It also specifically binds to its receptor SecA. The chain is Protein-export protein SecB from Escherichia fergusonii (strain ATCC 35469 / DSM 13698 / CCUG 18766 / IAM 14443 / JCM 21226 / LMG 7866 / NBRC 102419 / NCTC 12128 / CDC 0568-73).